The primary structure comprises 314 residues: L-lactate dehydrogenase (314 aa).

NAD(+)-binding positions include Val17, Asp38, Lys43, Tyr69, and Gly83–Ala84. Substrate is bound by residues Gln86 and Arg92. NAD(+) is bound by residues Ser105, Ala122 to Asn124, and Ser147. Substrate is bound at residue Asn124–Asp127. Position 152–155 (Asp152–Arg155) interacts with substrate. Beta-D-fructose 1,6-bisphosphate-binding residues include Arg157 and His172. Catalysis depends on His179, which acts as the Proton acceptor. Tyr223 carries the phosphotyrosine modification. Substrate is bound at residue Thr232.

This sequence belongs to the LDH/MDH superfamily. LDH family. Homotetramer.

The protein localises to the cytoplasm. It catalyses the reaction (S)-lactate + NAD(+) = pyruvate + NADH + H(+). The protein operates within fermentation; pyruvate fermentation to lactate; (S)-lactate from pyruvate: step 1/1. Its activity is regulated as follows. Allosterically activated by fructose 1,6-bisphosphate (FBP). Functionally, catalyzes the conversion of lactate to pyruvate. This Corynebacterium glutamicum (strain R) protein is L-lactate dehydrogenase.